A 353-amino-acid chain; its full sequence is Photosystem II D2 protein (353 aa).

Thr-2 is modified (N-acetylthreonine). Thr-2 carries the phosphothreonine modification. Residues 41–61 (CAYFAVGGWFTGTTFVTSWYT) form a helical membrane-spanning segment. His-118 is a binding site for chlorophyll a. A helical membrane pass occupies residues 125 to 141 (GFMLRQFELARSVQLRP). Pheophytin a contacts are provided by Gln-130 and Asn-143. The helical transmembrane segment at 153–166 (VFVSVFLIYPLGQS) threads the bilayer. His-198 contacts chlorophyll a. A helical transmembrane segment spans residues 208-228 (AALLCAIHGATVENTLFEDGD). 2 residues coordinate a plastoquinone: His-215 and Phe-262. Position 215 (His-215) interacts with Fe cation. Residue His-269 coordinates Fe cation. The chain crosses the membrane as a helical span at residues 279 to 295 (GLWMSALGVVGLALNLR).

This sequence belongs to the reaction center PufL/M/PsbA/D family. PSII is composed of 1 copy each of membrane proteins PsbA, PsbB, PsbC, PsbD, PsbE, PsbF, PsbH, PsbI, PsbJ, PsbK, PsbL, PsbM, PsbT, PsbX, PsbY, PsbZ, Psb30/Ycf12, at least 3 peripheral proteins of the oxygen-evolving complex and a large number of cofactors. It forms dimeric complexes. The cofactor is The D1/D2 heterodimer binds P680, chlorophylls that are the primary electron donor of PSII, and subsequent electron acceptors. It shares a non-heme iron and each subunit binds pheophytin, quinone, additional chlorophylls, carotenoids and lipids. There is also a Cl(-1) ion associated with D1 and D2, which is required for oxygen evolution. The PSII complex binds additional chlorophylls, carotenoids and specific lipids..

The protein localises to the plastid. It localises to the chloroplast thylakoid membrane. It catalyses the reaction 2 a plastoquinone + 4 hnu + 2 H2O = 2 a plastoquinol + O2. Its function is as follows. Photosystem II (PSII) is a light-driven water:plastoquinone oxidoreductase that uses light energy to abstract electrons from H(2)O, generating O(2) and a proton gradient subsequently used for ATP formation. It consists of a core antenna complex that captures photons, and an electron transfer chain that converts photonic excitation into a charge separation. The D1/D2 (PsbA/PsbD) reaction center heterodimer binds P680, the primary electron donor of PSII as well as several subsequent electron acceptors. D2 is needed for assembly of a stable PSII complex. The sequence is that of Photosystem II D2 protein from Nicotiana tabacum (Common tobacco).